The sequence spans 322 residues: Beta-ketoacyl-[acyl-carrier-protein] synthase III (322 aa).

Catalysis depends on residues C113 and H249. An ACP-binding region spans residues 250 to 254 (QANVR). N279 is a catalytic residue.

This sequence belongs to the thiolase-like superfamily. FabH family. Homodimer.

Its subcellular location is the cytoplasm. The enzyme catalyses malonyl-[ACP] + acetyl-CoA + H(+) = 3-oxobutanoyl-[ACP] + CO2 + CoA. The protein operates within lipid metabolism; fatty acid biosynthesis. In terms of biological role, catalyzes the condensation reaction of fatty acid synthesis by the addition to an acyl acceptor of two carbons from malonyl-ACP. Catalyzes the first condensation reaction which initiates fatty acid synthesis and may therefore play a role in governing the total rate of fatty acid production. Possesses both acetoacetyl-ACP synthase and acetyl transacylase activities. Its substrate specificity determines the biosynthesis of branched-chain and/or straight-chain of fatty acids. This chain is Beta-ketoacyl-[acyl-carrier-protein] synthase III, found in Anaplasma marginale (strain St. Maries).